We begin with the raw amino-acid sequence, 623 residues long: ATP-dependent lipid A-core flippase (623 aa).

5 helical membrane passes run 66–86 (LVLA…LAVI), 103–123 (VWFL…CNFF), 190–210 (LVVI…TLII), 290–310 (LTPL…AVAL), and 317–337 (ALTV…FDPI). The region spanning 67–349 (VLAVLLMAGA…LTNLAGKMQK (283 aa)) is the ABC transmembrane type-1 domain. The region spanning 382-618 (VEFRAVSHRF…NGLYASLYNM (237 aa)) is the ABC transporter domain. 416–423 (GRSGSGKT) serves as a coordination point for ATP.

It belongs to the ABC transporter superfamily. Lipid exporter (TC 3.A.1.106) family. In terms of assembly, homodimer.

It localises to the cell inner membrane. It catalyses the reaction ATP + H2O + lipid A-core oligosaccharideSide 1 = ADP + phosphate + lipid A-core oligosaccharideSide 2.. Involved in lipopolysaccharide (LPS) biosynthesis. Translocates lipid A-core from the inner to the outer leaflet of the inner membrane. Transmembrane domains (TMD) form a pore in the inner membrane and the ATP-binding domain (NBD) is responsible for energy generation. This chain is ATP-dependent lipid A-core flippase, found in Bordetella bronchiseptica (strain ATCC BAA-588 / NCTC 13252 / RB50) (Alcaligenes bronchisepticus).